The sequence spans 397 residues: ATP-dependent RNA helicase eIF4A (397 aa).

A Q motif motif is present at residues 23-51 (YTFDDLNLKPNIVRGIFGYGYESPSAIQQ). A Helicase ATP-binding domain is found at 54–224 (ILPITEGRDV…TKFMNNPVRI (171 aa)). 67-74 (AQSGTGKT) provides a ligand contact to ATP. The short motif at 172 to 175 (DEAD) is the DEAD box element. In terms of domain architecture, Helicase C-terminal spans 235-396 (GIKQFYINVE…EMPADIGALF (162 aa)).

This sequence belongs to the DEAD box helicase family. eIF4A subfamily. In terms of assembly, component of the eIF4F complex, which composition varies with external and internal environmental conditions. It is composed of at least eIF4A, eIF4E and eIF4G.

The protein localises to the cytoplasm. The catalysed reaction is ATP + H2O = ADP + phosphate + H(+). Its function is as follows. ATP-dependent RNA helicase which is a subunit of the eIF4F complex involved in cap recognition and is required for mRNA binding to ribosome. In the current model of translation initiation, eIF4A unwinds RNA secondary structures in the 5'-UTR of mRNAs which is necessary to allow efficient binding of the small ribosomal subunit, and subsequent scanning for the initiator codon. In Debaryomyces hansenii (strain ATCC 36239 / CBS 767 / BCRC 21394 / JCM 1990 / NBRC 0083 / IGC 2968) (Yeast), this protein is ATP-dependent RNA helicase eIF4A (TIF1).